The primary structure comprises 308 residues: Lysophosphatidic acid receptor 6 (308 aa).

Residues 1–16 (MVSSNCSTEDSFKYTL) are Extracellular-facing. N5 is a glycosylation site (N-linked (GlcNAc...) asparagine). The helical transmembrane segment at 17–43 (YGCVFSMVFVLGLIANCVAIYIFTFTL) threads the bilayer. At 44 to 52 (KVRNETTTY) the chain is on the cytoplasmic side. A helical transmembrane segment spans residues 53–76 (MLNLAISDLLFVFTLPFRIYYFVV). The Extracellular portion of the chain corresponds to 77–89 (RNWPFGDVLCKIS). A disulfide bridge connects residues C86 and C165. Residues 90-109 (VTLFYTNMYGSILFLTCISV) form a helical membrane-spanning segment. Topologically, residues 110–130 (DRFLAIVHPFRSKTLRTKRNA) are cytoplasmic. Residues 131 to 151 (RIVCVAVWITVLAGSTPASFF) traverse the membrane as a helical segment. Over 152–178 (QSTNRQNNTEQRTCFENFPESTWKTYL) the chain is Extracellular. The chain crosses the membrane as a helical span at residues 179 to 206 (SRIVIFIEIVGFFIPLILNVTCSTMVLR). Residues 207–224 (TLNKPLTLSRNKLSKKKV) lie on the Cytoplasmic side of the membrane. Residues 225-250 (LKMIFVHLVIFCFCFVPYNITLILYS) form a helical membrane-spanning segment. At 251–269 (LMRTQTWINCSVVTAVRTM) the chain is on the extracellular side. A helical membrane pass occupies residues 270-289 (YPVTLCIAVSNCCFDPIVYY). C281 carries the S-palmitoyl cysteine lipid modification. Topologically, residues 290-308 (FTSDTNSELDKKQQVHQNT) are cytoplasmic.

The protein belongs to the G-protein coupled receptor 1 family. In terms of tissue distribution, induced in activated T-cells.

The protein resides in the cell membrane. Functionally, binds to oleoyl-L-alpha-lysophosphatidic acid (LPA). Intracellular cAMP is involved in the receptor activation. The polypeptide is Lysophosphatidic acid receptor 6 (LPAR6) (Gallus gallus (Chicken)).